The primary structure comprises 873 residues: Bifunctional uridylyltransferase/uridylyl-removing enzyme (873 aa).

Positions 1–332 (MKYLSPLSLS…HQGEQDDAII (332 aa)) are uridylyltransferase. The interval 333–692 (IDDDFQRRGR…ISKNASRGGT (360 aa)) is uridylyl-removing. The HD domain occupies 451 to 573 (VDEHSIRLLK…VRDEERLDYL (123 aa)). ACT domains follow at residues 693-777 (EIFV…RPPR) and 800-873 (LMEF…RLSS).

This sequence belongs to the GlnD family. Mg(2+) is required as a cofactor.

It catalyses the reaction [protein-PII]-L-tyrosine + UTP = [protein-PII]-uridylyl-L-tyrosine + diphosphate. The enzyme catalyses [protein-PII]-uridylyl-L-tyrosine + H2O = [protein-PII]-L-tyrosine + UMP + H(+). With respect to regulation, uridylyltransferase (UTase) activity is inhibited by glutamine, while glutamine activates uridylyl-removing (UR) activity. Functionally, modifies, by uridylylation and deuridylylation, the PII regulatory proteins (GlnB and homologs), in response to the nitrogen status of the cell that GlnD senses through the glutamine level. Under low glutamine levels, catalyzes the conversion of the PII proteins and UTP to PII-UMP and PPi, while under higher glutamine levels, GlnD hydrolyzes PII-UMP to PII and UMP (deuridylylation). Thus, controls uridylylation state and activity of the PII proteins, and plays an important role in the regulation of nitrogen assimilation and metabolism. In Aliivibrio fischeri (strain MJ11) (Vibrio fischeri), this protein is Bifunctional uridylyltransferase/uridylyl-removing enzyme.